A 113-amino-acid chain; its full sequence is Hydrogenase maturation factor HybF (113 aa).

2 residues coordinate Ni(2+): H2 and E3. Zn(2+) is bound by residues C73, C76, C89, and C92.

The protein belongs to the HypA/HybF family. HybF subfamily.

Functionally, involved in the maturation of [NiFe] hydrogenases. Required for nickel insertion into the metal center of the hydrogenase. The polypeptide is Hydrogenase maturation factor HybF (Salmonella typhi).